Here is a 327-residue protein sequence, read N- to C-terminus: tRNA uridine(34) hydroxylase (327 aa).

A Rhodanese domain is found at 123–217 (SDPEVLVVDT…YLEEVPQEQS (95 aa)). The active-site Cysteine persulfide intermediate is Cys177.

It belongs to the TrhO family.

It catalyses the reaction uridine(34) in tRNA + AH2 + O2 = 5-hydroxyuridine(34) in tRNA + A + H2O. Its function is as follows. Catalyzes oxygen-dependent 5-hydroxyuridine (ho5U) modification at position 34 in tRNAs. The sequence is that of tRNA uridine(34) hydroxylase from Vibrio cholerae serotype O1 (strain ATCC 39315 / El Tor Inaba N16961).